The chain runs to 120 residues: UPF0102 protein Caur_2698 (120 aa).

The protein belongs to the UPF0102 family.

The sequence is that of UPF0102 protein Caur_2698 from Chloroflexus aurantiacus (strain ATCC 29366 / DSM 635 / J-10-fl).